A 2294-amino-acid chain; its full sequence is MSFPEPVAIIGMGCRFPGDSDTPDEFWKMLAEERSGLSRPPLSRWNIDGFHANKARPGSLTPEGGYFINEDIWKFDPAFFGIVQEEAKAMDPQQRKLLECVYESFESGGITLSQLSGSNTGCYIGNFTSDYYLQGHRDHNNPKPYSLLGSGYTIISNRVSYLFDLCGPRALQTKEIDAAVVGGTNLMLAVETQMSTDKVGVLSATSTCHTFDESADGYGRAEGVGAIFLKRLSDAIRDNDPIRGVIRGTATNANGKTSGITQPSAKGHETVMRTAYEFAGLDPRDTSYFETHGTGTQVGDPIEIKGVGNFFFNGTDRQKLLVGSVKTNVGHSEAASALASIIKVCLAMEKRTIPATIGIKKLNPKIDFKGGRIEVVQKMTPWPKGFSVCRASINSFGYGGANATAIVEAADSVLPGKLTYTRRGQDERDLEASSEESESVEMVGTKSASQVRAVSRSEFLLLFSAHDISTLKSNIERCRDVAEDYNILDLAYTLGCRRSNFFNCAYTVAREDDVEEDLMEHEITFGKRGNGGNIGFIFTGQGAQNAQMGRELMLTFPSYIDTIRKLDRSLQSLGDDSPDWTIEDVLMEPAVTSKINDVEISQPVCTAVQIALVELLRLWNVTPVACIGHSSGEIASSYAANLIPAEEAIISAFYRGRGVGTLKVKGTMLAVGAGPEEIQPYLTDGLRIACYNSPNSVTLSGDIEPATIVQKKLESDRVFVRELKTGGRAYHSHHMLNIGNDYESRLSEALSRFGASQTTNQAQVQNPVFFSSVTAQQMPSNFKPGPSYWRQNLESPVRFTEAVEAALAADLGISQFVEIGPHSALAGPLRQIRDNLGITPKDLDYAATLVRGQSSVTRLLDLAGTLTMRGFSVNVERVNAIEKREGGAIITKTGLPIVDLPRFSWNYSAGEIRNKNRPDEEHRLRKFKYHDLLGAILPGSSVEQRQWRNMLDSKNFPWLEEHKLGPQPVLPGTGYLAIATEAARQFFHDKLTVSGAFRYFFPNISITSALNIPPSGSQVEIVTTMKFATITASITSKTIAEFTISSIQAGNWTNHCVGTVTKKKAVTMAPRFDESKLQEPKAARTWYRGFQKVSLNYGPAFNGLSNIRTNPALEEAVADTELCPDGVSEHDSAYIVHPAAMDTCIQVALIGAHKGSLAGLKRSFVPTSMANVSLWSWADDDHITQLTPGKGKVLAHAEFFSLRAMNGWCQLFSPEGKPLFEIEELSCTQYSEALDDLGTIDRHPYLRTVWKPDVDKMVSNLTDNSLLDLIVHKRPGFNICEILNTESMISDNLHRVLESGSSLRRYKTYTVMALGDVDIEPIKVKYEAFPGVVVQKLVLDDVPETFFDLLIVPQFPSDEIDLAKLKGLLTPGGNMLLYSSEFKNGNTIKTDLQLAGLYTLLEDKESLLISPHQRTSSDLPAGEIVLVTRTSPTVFDSHIFSGLSKSGRLITSISLQDFKFHAHTKATYVFIVESESSIFHGSLTSQELATIQSVASGATNMLWVTHGNLLEGDDPNAGIVIGLGRCLQTEHPTLTFKTLDLDHRDPIQTISNITTILNAADSGDEDKEFMVKNGIFYVSRLSQDPLLDQQFVSGVESEPKMIPYEPEKRIRLGIERVGIFDTIHFKDDELEASLKPGEVEVDVKAVGLNMKDFATLQGTYNSEILGLEGAGIVRSIGTGVTNVAIGDRKLKPEETLDQMSSIMMPFLTAIYGLIYLAKLQPGESVLINSATGGVGLAAIQIAKMIGAEIFATVGTPEKKKFLMQEYGLQDDHVLSSKDASFAAEIMQTTGGRGVDVSLNSLVREQLRATWNCIGHHGRHIELGQTDILDQGILDMSPFKRGASFIAMDLVLVFEHKPDLISQILGEIMHYYRDCKIQPLPNLSVFPVSAIGKAFEEFGKNSRIGRVVVSFDTETINTRLSLRRRRSQLLSSQMVHTYLLGVLEALVDVWLVTWLKKGARHLIFLGRSGEDRPEAASMIKDFRNDGITVDVVKGDVTRISDVQKAVDLAAGPLFGVVQGVMALDDRLFTSHDLNSWEYAVRPKVTGTWNLHNAVASHSLDFFVMLGSSSALSGFPTQSNYCAGNSFLEFFARYRQSKGLPATTISLTVVTEVGFVSQNERIEDGLARTGVHTINEAGVIDLIDTAMMKAPSSSWNLDPLANSFIVTGVEPLQLSANLDIDSIPFWRQPRIGPVFNAVLAKKSGNETGPGQNKRRLLLPDILEMIIEKFSQTFNVAVEDIDPGTEIVRFGMDSMIGTSLRTWCYKTLGADIAASDFMSLNLTADSLAKKIYDIRKG.

One can recognise a Ketosynthase family 3 (KS3) domain in the interval 4–409 (PEPVAIIGMG…GANATAIVEA (406 aa)). Positions 537–853 (IFTGQGAQNA…DYAATLVRGQ (317 aa)) are malonyl-CoA:ACP transacylase (MAT) domain. Residue serine 630 is the For malonyltransferase activity of the active site. The N-terminal hotdog fold stretch occupies residues 930 to 1067 (HDLLGAILPG…GTVTKKKAVT (138 aa)). The tract at residues 930 to 1104 (HDLLGAILPG…LNYGPAFNGL (175 aa)) is dehydratase (DH) domain. A PKS/mFAS DH domain is found at 930–1236 (HDLLGAILPG…CTQYSEALDD (307 aa)). Histidine 962 functions as the Proton acceptor; for dehydratase activity in the catalytic mechanism. The C-terminal hotdog fold stretch occupies residues 1078 to 1236 (QEPKAARTWY…CTQYSEALDD (159 aa)). Aspartate 1142 functions as the Proton donor; for dehydratase activity in the catalytic mechanism. An enoyl reductase (ER) domain region spans residues 1618–1908 (GIFDTIHFKD…KNSRIGRVVV (291 aa)). Residues 1934 to 2107 (VHTYLLGVLE…LPATTISLTV (174 aa)) form a ketoreductase (KR) domain region. In terms of domain architecture, Carrier spans 2214–2292 (LLLPDILEMI…SLAKKIYDIR (79 aa)). Serine 2251 bears the O-(pantetheine 4'-phosphoryl)serine mark.

It functions in the pathway polyketide biosynthesis. In terms of biological role, reducing polyketide synthase; part of the gene cluster B that mediates the biosynthesis of botcinic acid and its botcinin derivatives, acetate-derived polyketides that contribute to virulence when combined with the sesquiterpene botrydial. Botcinic acid and its derivatives have been shown to induce chlorosis and necrosis during host plant infection, but also have antifungal activities. Two polyketide synthases, BOA6 and BOA9, are involved in the biosynthesis of botcinins. BOA6 mediates the formation of the per-methylated tetraketide core by condensation of four units of malonyl-CoA with one unit of acetyl-CoA, which would be methylated in activated methylene groups to yield a bicyclic acid intermediate that could then either be converted to botrylactone derivatives or lose the starter acetate unit through a retro-Claisen type C-C bond cleavage to yield botcinin derivatives. The second polyketide synthase, BOA9, is probably required for the biosynthesis of the tetraketide side chain of botcinins. The methyltransferase (MT) domain within BOA6 is probably responsible for the incorporation of four methyl groups. The trans-enoyl reductase BOA5 might take over the enoyl reductase function of BOA6 that misses an ER domain. The monooxygenases BOA2, BOA3 and BOA4 might be involved in further hydroxylations at C4, C5 and C8, whereas BOA7, close to BOA9, could potentially be involved in the hydroxylation at C4 in the side chain of botcinins. The chain is Reducing polyketide synthase BOA9 from Botryotinia fuckeliana (strain B05.10) (Noble rot fungus).